We begin with the raw amino-acid sequence, 314 residues long: Glutathione synthetase (314 aa).

The ATP-grasp domain occupies 125 to 309 (KLFVMNFPQL…VAAKVWDTIE (185 aa)). 151 to 207 (RDKHGAVVMKPLHGHGGAAVFRVMPQDMNFGSLFDMFTVTFKEPWVIQQFIPEVKHG) is a binding site for ATP. The Mg(2+) site is built by glutamate 280 and asparagine 282.

This sequence belongs to the prokaryotic GSH synthase family. It depends on Mg(2+) as a cofactor. Mn(2+) is required as a cofactor.

It carries out the reaction gamma-L-glutamyl-L-cysteine + glycine + ATP = glutathione + ADP + phosphate + H(+). It functions in the pathway sulfur metabolism; glutathione biosynthesis; glutathione from L-cysteine and L-glutamate: step 2/2. The sequence is that of Glutathione synthetase from Bradyrhizobium diazoefficiens (strain JCM 10833 / BCRC 13528 / IAM 13628 / NBRC 14792 / USDA 110).